The sequence spans 739 residues: Catalase-peroxidase (739 aa).

Residues 1 to 33 are disordered; that stretch reads MSVEHPPIGEANTEPAAGGCPVTGRLRHPLQGG. Residues 106–229 constitute a cross-link (tryptophyl-tyrosyl-methioninium (Trp-Tyr) (with M-255)); the sequence is WHSAGTYRSS…LAAVQMGLIY (124 aa). The Proton acceptor role is filled by H107. The segment at 113-134 is disordered; sequence RSSDGRGGANTGQQRFAPLNSW. Residues 229–255 constitute a cross-link (tryptophyl-tyrosyl-methioninium (Tyr-Met) (with W-106)); that stretch reads YVNPEGPNGNPDPLAAAVDIKDTFGRM. H270 contributes to the heme b binding site.

This sequence belongs to the peroxidase family. Peroxidase/catalase subfamily. In terms of assembly, homodimer or homotetramer. Heme b serves as cofactor. In terms of processing, formation of the three residue Trp-Tyr-Met cross-link is important for the catalase, but not the peroxidase activity of the enzyme.

It carries out the reaction H2O2 + AH2 = A + 2 H2O. The enzyme catalyses 2 H2O2 = O2 + 2 H2O. Bifunctional enzyme with both catalase and broad-spectrum peroxidase activity. The protein is Catalase-peroxidase of Nocardia farcinica (strain IFM 10152).